The sequence spans 118 residues: Holo-[acyl-carrier-protein] synthase (118 aa).

The Mg(2+) site is built by Asp-8 and Glu-58.

Belongs to the P-Pant transferase superfamily. AcpS family. Mg(2+) serves as cofactor.

Its subcellular location is the cytoplasm. It catalyses the reaction apo-[ACP] + CoA = holo-[ACP] + adenosine 3',5'-bisphosphate + H(+). Transfers the 4'-phosphopantetheine moiety from coenzyme A to a Ser of acyl-carrier-protein. This chain is Holo-[acyl-carrier-protein] synthase, found in Streptococcus pyogenes serotype M1.